A 451-amino-acid polypeptide reads, in one-letter code: Sensor histidine kinase CssS (451 aa).

Topologically, residues 1-9 (MKNKPLAFQ) are cytoplasmic. The chain crosses the membrane as a helical span at residues 10 to 30 (IWVVISGILLAISILLLVLFS). Residues 31-165 (NTLRDFFTNE…RDDLAYTLFK (135 aa)) are Extracellular-facing. The helical transmembrane segment at 166 to 186 (QLLFIIAVVILLSWIPAIWLA) threads the bilayer. Residues 187-239 (KYLSRPLVSFEKHVKRISEQDWDDPVKVDRKDEIGKLGHTIEEMRQKLVQKDE) form the HAMP domain. The Cytoplasmic segment spans residues 187 to 451 (KYLSRPLVSF…GVTYRIAVPK (265 aa)). Residues 247–451 (NISHDLKTPV…GVTYRIAVPK (205 aa)) form the Histidine kinase domain. Histidine 250 is subject to Phosphohistidine; by autocatalysis.

It localises to the cell membrane. It carries out the reaction ATP + protein L-histidine = ADP + protein N-phospho-L-histidine.. In terms of biological role, member of the two-component regulatory system CssS/CssR required to control the cellular response to secretion stress. Required for the transcription of htrA. Could detect misfolded proteins at the membrane-cell wall interface and then activate CssR by phosphorylation. The protein is Sensor histidine kinase CssS (cssS) of Bacillus subtilis (strain 168).